Reading from the N-terminus, the 345-residue chain is NADH-quinone oxidoreductase subunit H (345 aa).

The next 8 membrane-spanning stretches (helical) occupy residues 13–33, 84–104, 115–135, 161–181, 190–210, 248–268, 277–297, and 309–329; these read VLILAQVLAVIGFVMVSLLFL, FMLAPMTSFVLALLAWAVIPF, VAILFVFAISSLEVYGVIMGG, LGLIIIGVIISTGSMNFGGIV, FFSWYWLPHFPMVFLFFISCL, YIAIFLMCALTSLLFFGGWLS, VFWMIAKMAFFFFLFAMVKAI, and LGWKVFLPFSLVWVVFVAFAA.

It belongs to the complex I subunit 1 family. In terms of assembly, NDH-1 is composed of 14 different subunits. Subunits NuoA, H, J, K, L, M, N constitute the membrane sector of the complex.

It is found in the cell inner membrane. The catalysed reaction is a quinone + NADH + 5 H(+)(in) = a quinol + NAD(+) + 4 H(+)(out). In terms of biological role, NDH-1 shuttles electrons from NADH, via FMN and iron-sulfur (Fe-S) centers, to quinones in the respiratory chain. The immediate electron acceptor for the enzyme in this species is believed to be ubiquinone. Couples the redox reaction to proton translocation (for every two electrons transferred, four hydrogen ions are translocated across the cytoplasmic membrane), and thus conserves the redox energy in a proton gradient. This subunit may bind ubiquinone. The chain is NADH-quinone oxidoreductase subunit H from Roseobacter denitrificans (strain ATCC 33942 / OCh 114) (Erythrobacter sp. (strain OCh 114)).